A 179-amino-acid polypeptide reads, in one-letter code: Large ribosomal subunit protein uL6 (179 aa).

This sequence belongs to the universal ribosomal protein uL6 family. In terms of assembly, part of the 50S ribosomal subunit.

Functionally, this protein binds to the 23S rRNA, and is important in its secondary structure. It is located near the subunit interface in the base of the L7/L12 stalk, and near the tRNA binding site of the peptidyltransferase center. The protein is Large ribosomal subunit protein uL6 of Acaryochloris marina (strain MBIC 11017).